The sequence spans 521 residues: 2-isopropylmalate synthase (521 aa).

The Pyruvate carboxyltransferase domain maps to 5–267; that stretch reads VIIFDTTLRD…HTNIKHQEIH (263 aa). Positions 14, 202, 204, and 238 each coordinate Mn(2+). The tract at residues 392-521 is regulatory domain; the sequence is KLNYLSVQSG…FAQKTVMETL (130 aa).

Belongs to the alpha-IPM synthase/homocitrate synthase family. LeuA type 1 subfamily. As to quaternary structure, homodimer. It depends on Mn(2+) as a cofactor.

It is found in the cytoplasm. The enzyme catalyses 3-methyl-2-oxobutanoate + acetyl-CoA + H2O = (2S)-2-isopropylmalate + CoA + H(+). The protein operates within amino-acid biosynthesis; L-leucine biosynthesis; L-leucine from 3-methyl-2-oxobutanoate: step 1/4. Catalyzes the condensation of the acetyl group of acetyl-CoA with 3-methyl-2-oxobutanoate (2-ketoisovalerate) to form 3-carboxy-3-hydroxy-4-methylpentanoate (2-isopropylmalate). The protein is 2-isopropylmalate synthase of Tolumonas auensis (strain DSM 9187 / NBRC 110442 / TA 4).